A 651-amino-acid polypeptide reads, in one-letter code: Crossover junction endonuclease MUS81 (651 aa).

The interval 99-124 (RKHEVSDTSNLPDAKPKKQRKQKQYI) is disordered. The segment covering 115 to 124 (KKQRKQKQYI) has biased composition (basic residues). In terms of domain architecture, ERCC4 spans 361-458 (ILIIDNREIR…QFYYLVEDVV (98 aa)).

Belongs to the XPF family. Interacts with EME1. Mg(2+) serves as cofactor.

Its subcellular location is the nucleus. Its function is as follows. Interacts with EME1 to form a DNA structure-specific endonuclease with substrate preference for branched DNA structures with a 5'-end at the branch nick. Typical substrates include 3'-flap structures, D-loops, replication forks and nicked Holliday junctions. May be required in mitosis for the processing of stalled or collapsed replication fork intermediates. May be required in meiosis for the repair of meiosis-specific double strand breaks subsequent to single-end invasion (SEI). The polypeptide is Crossover junction endonuclease MUS81 (MUS81) (Debaryomyces hansenii (strain ATCC 36239 / CBS 767 / BCRC 21394 / JCM 1990 / NBRC 0083 / IGC 2968) (Yeast)).